The chain runs to 873 residues: Leucine--tRNA ligase (873 aa).

The 'HIGH' region motif lies at 42 to 52; that stretch reads PYPSGKLHMGH. The disordered stretch occupies residues 624–643; it reads PVEIGGTEKMSKSKNNGVDP. A 'KMSKS' region motif is present at residues 632–636; that stretch reads KMSKS. Lysine 635 is a binding site for ATP.

Belongs to the class-I aminoacyl-tRNA synthetase family.

Its subcellular location is the cytoplasm. The catalysed reaction is tRNA(Leu) + L-leucine + ATP = L-leucyl-tRNA(Leu) + AMP + diphosphate. The protein is Leucine--tRNA ligase of Pseudomonas paraeruginosa (strain DSM 24068 / PA7) (Pseudomonas aeruginosa (strain PA7)).